We begin with the raw amino-acid sequence, 106 residues long: UPF0145 protein Dhaf_3855 (106 aa).

Belongs to the UPF0145 family.

The polypeptide is UPF0145 protein Dhaf_3855 (Desulfitobacterium hafniense (strain DSM 10664 / DCB-2)).